Reading from the N-terminus, the 433-residue chain is Glutamate-1-semialdehyde 2,1-aminomutase (433 aa).

Lys-267 bears the N6-(pyridoxal phosphate)lysine mark.

Belongs to the class-III pyridoxal-phosphate-dependent aminotransferase family. HemL subfamily. Homodimer. Pyridoxal 5'-phosphate serves as cofactor.

The protein resides in the cytoplasm. It carries out the reaction (S)-4-amino-5-oxopentanoate = 5-aminolevulinate. It participates in porphyrin-containing compound metabolism; protoporphyrin-IX biosynthesis; 5-aminolevulinate from L-glutamyl-tRNA(Glu): step 2/2. This is Glutamate-1-semialdehyde 2,1-aminomutase from Syntrophobacter fumaroxidans (strain DSM 10017 / MPOB).